The following is a 135-amino-acid chain: uncharacterized protein (135 aa).

Positions 1-80 are disordered; that stretch reads MRSSSLPGAR…QRGSCASANA (80 aa). Positions 54–65 are enriched in gly residues; it reads GARGGGRRGWGG.

This is an uncharacterized protein from Homo sapiens (Human).